Here is a 1154-residue protein sequence, read N- to C-terminus: Spike glycoprotein (1154 aa).

A signal peptide spans 1-18 (MLERSLLLATLLSALCSA). At 19-1096 (NLFGNNSYVY…LKTYIKWPWY (1078 aa)) the chain is on the extracellular side. Asn23, Asn74, Asn102, Asn139, Asn145, Asn164, Asn179, Asn213, Asn238, Asn248, Asn265, Asn272, Asn277, Asn307, Asn426, Asn448, Asn514, Asn531, Asn543, Asn580, Asn592, Asn670, and Asn677 each carry an N-linked (GlcNAc...) asparagine; by host glycan. Residues 770–875 (IPFATQLQAR…QVDRIITGRL (106 aa)) are heptad repeat 1 (HR1). A coiled-coil region spans residues 823 to 867 (QDVVNKQSSILTETMASLNKNFGAISSVLQDIYQQLDSIQADAQV). N-linked (GlcNAc...) asparagine; by host glycans are attached at residues Asn948, Asn961, Asn980, Asn1015, Asn1039, Asn1052, and Asn1075. The interval 1025–1106 (NDDFDFDDEL…VWLAIAFATI (82 aa)) is heptad repeat 2 (HR2). Residues 1056 to 1084 (PILDIGSEIDRIQGVIQGLNDSLIDLETL) adopt a coiled-coil conformation. Residues 1097-1117 (VWLAIAFATIIFILILGWLFF) traverse the membrane as a helical segment. Residues 1118–1154 (MTGCCGCCCGCFGIIPLMSKCGKKSSYYTTFDNDVVT) lie on the Cytoplasmic side of the membrane.

The protein belongs to the gammacoronaviruses spike protein family. Homotrimer; each monomer consists of a S1 and a S2 subunit. The resulting peplomers protrude from the virus surface as spikes. Specific enzymatic cleavages in vivo yield mature proteins. The precursor is processed into S1 and S2 by host cell furin or furin-like protease to yield the mature S1 and S2 proteins. The cleavage site between S1 and S2 requires the optimal sequence [KR]-X-[KR]-R. Additionally, a second cleavage leads to the release of a fusion peptide after viral attachment to host cell receptor.

It is found in the virion membrane. Its subcellular location is the host endoplasmic reticulum-Golgi intermediate compartment membrane. Functionally, attaches the virion to the host cell membrane by interacting with sialic acids, initiating the infection. In terms of biological role, mediates fusion of the virion and cellular membranes by acting as a class I viral fusion protein. Under the current model, the protein has at least 3 conformational states: pre-fusion native state, pre-hairpin intermediate state, and post-fusion hairpin state. During viral and target cell membrane fusion, the coiled coil regions (heptad repeats) assume a trimer-of-hairpins structure, positioning the fusion peptide in close proximity to the C-terminal region of the ectodomain. The formation of this structure appears to drive apposition and subsequent fusion of viral and target cell membranes. Acts as a viral fusion peptide after S2 cleavage occurring upon virus endocytosis. The polypeptide is Spike glycoprotein (Gallus gallus (Chicken)).